Consider the following 254-residue polypeptide: 4-hydroxy-tetrahydrodipicolinate reductase (254 aa).

Residue 7 to 12 (GASGRI) participates in NAD(+) binding. Position 35 (Arg-35) interacts with NADP(+). Residues 91–93 (GTT) and 115–118 (AHNM) each bind NAD(+). His-147 functions as the Proton donor/acceptor in the catalytic mechanism. His-148 contacts (S)-2,3,4,5-tetrahydrodipicolinate. Residue Lys-151 is the Proton donor of the active site. 157-158 (GT) is a (S)-2,3,4,5-tetrahydrodipicolinate binding site.

This sequence belongs to the DapB family.

The protein resides in the cytoplasm. The enzyme catalyses (S)-2,3,4,5-tetrahydrodipicolinate + NAD(+) + H2O = (2S,4S)-4-hydroxy-2,3,4,5-tetrahydrodipicolinate + NADH + H(+). The catalysed reaction is (S)-2,3,4,5-tetrahydrodipicolinate + NADP(+) + H2O = (2S,4S)-4-hydroxy-2,3,4,5-tetrahydrodipicolinate + NADPH + H(+). The protein operates within amino-acid biosynthesis; L-lysine biosynthesis via DAP pathway; (S)-tetrahydrodipicolinate from L-aspartate: step 4/4. In terms of biological role, catalyzes the conversion of 4-hydroxy-tetrahydrodipicolinate (HTPA) to tetrahydrodipicolinate. The sequence is that of 4-hydroxy-tetrahydrodipicolinate reductase from Helicobacter pylori (strain G27).